A 1733-amino-acid polypeptide reads, in one-letter code: Gag-Pol polyprotein (1733 aa).

Gly-2 is lipidated: N-myristoyl glycine; by host. Pro residues predominate over residues 108–121 (LPTAPVLPPGPSAQ). Disordered regions lie at residues 108 to 218 (LPTA…LRMG), 449 to 469 (KEER…RRRH), and 511 to 550 (WAKD…EPRI). The PTAP/PSAP motif signature appears at 109–112 (PTAP). The LYPX(n)L motif motif lies at 128-132 (LYPAL). Residues 161–164 (PPPY) carry the PPXY motif motif. Ser-190 carries the phosphoserine; by host modification. The stretch at 436–476 (EEREERIRREIEEKEERRRAEDEQRERERDRRRHREMSKLL) forms a coiled coil. The segment covering 449–464 (KEERRRAEDEQRERER) has biased composition (basic and acidic residues). A CCHC-type zinc finger spans residues 500–517 (DQCAYCKEKGHWAKDCPK). Over residues 526–535 (RPQTSLLTLG) the composition is skewed to low complexity. The Peptidase A2 domain maps to 559 to 629 (VTFLVDTGAQ…CPYPLLGRDL (71 aa)). The Protease; shared with dimeric partner role is filled by Asp-564. The RNA site is built by Tyr-721, Asp-771, Arg-773, and Pro-787. The 192-residue stretch at 739 to 930 (LDQGILVPCQ…KQVKYLGYLL (192 aa)) folds into the Reverse transcriptase domain. Asp-807 lines the Mg(2+) pocket. Residues Asn-851 and Pro-853 each contribute to the RNA site. Residues Asp-881 and Asp-882 each contribute to the Mg(2+) site. Residues Arg-941, Arg-955, Arg-958, and Phe-966 each coordinate DNA. The RNA site is built by Lys-1054 and Lys-1055. Trp-1063 contacts DNA. Lys-1082 is a binding site for RNA. Residue Arg-1113 coordinates DNA. One can recognise an RNase H type-1 domain in the interval 1172 to 1318 (PDADYTWYTD…ADQAAREAAM (147 aa)). Asp-1181 serves as a coordination point for Mg(2+). RNA is bound by residues Ser-1184 and Leu-1186. 3 residues coordinate DNA: Gln-1187, Ser-1214, and Gln-1216. Mg(2+) is bound by residues Glu-1219 and Asp-1240. 2 residues coordinate RNA: Arg-1242 and Arg-1266. Mg(2+) contacts are provided by Asp-1310, Asp-1453, and Asp-1512. The region spanning 1442-1600 (RGHRPGTHWE…TPYEILYGAP (159 aa)) is the Integrase catalytic domain.

Homohexamer. Further associates as homomultimer. The virus core is composed of a lattice formed from hexagonal rings, each containing six capsid monomers. In terms of assembly, homodimer. The protease is a homodimer, whose active site consists of two apposed aspartic acid residues. The reverse transcriptase is a monomer. Mg(2+) is required as a cofactor. Requires Mn(2+) as cofactor. In terms of processing, specific enzymatic cleavages by the viral protease yield mature proteins. The protease is released by autocatalytic cleavage. The polyprotein is cleaved during and after budding, this process is termed maturation. Post-translationally, sumoylated. Required for virus replication. Phosphorylated on serine residues.

The protein resides in the host cell membrane. It localises to the virion. It catalyses the reaction DNA(n) + a 2'-deoxyribonucleoside 5'-triphosphate = DNA(n+1) + diphosphate. It carries out the reaction Endonucleolytic cleavage to 5'-phosphomonoester.. Functionally, plays a role in budding and is processed by the viral protease during virion maturation outside the cell. During budding, it recruits, in a PPXY-dependent or independent manner, Nedd4-like ubiquitin ligases that conjugate ubiquitin molecules to Gag, or to Gag binding host factors. Interaction with HECT ubiquitin ligases probably link the viral protein to the host ESCRT pathway and facilitate release. Targets Gag and gag-pol polyproteins to the plasma membrane via a multipartite membrane binding signal, that includes its myristoylated N-terminus. Also mediates nuclear localization of the pre-integration complex. In terms of biological role, forms the spherical core of the virion that encapsulates the genomic RNA-nucleocapsid complex. Its function is as follows. Involved in the packaging and encapsidation of two copies of the genome. Binds with high affinity to conserved UCUG elements within the packaging signal, located near the 5'-end of the genome. This binding is dependent on genome dimerization. Functionally, the aspartyl protease mediates proteolytic cleavages of Gag and Gag-Pol polyproteins during or shortly after the release of the virion from the plasma membrane. Cleavages take place as an ordered, step-wise cascade to yield mature proteins. This process is called maturation. Displays maximal activity during the budding process just prior to particle release from the cell. Multifunctional enzyme that converts the viral dimeric RNA genome into dsDNA in the cytoplasm, shortly after virus entry into the cell. This enzyme displays a DNA polymerase activity that can copy either DNA or RNA templates, and a ribonuclease H (RNase H) activity that cleaves the RNA strand of RNA-DNA heteroduplexes in a partially processive 3' to 5' endonucleasic mode. Conversion of viral genomic RNA into dsDNA requires many steps. A tRNA binds to the primer-binding site (PBS) situated at the 5' end of the viral RNA. RT uses the 3' end of the tRNA primer to perform a short round of RNA-dependent minus-strand DNA synthesis. The reading proceeds through the U5 region and ends after the repeated (R) region which is present at both ends of viral RNA. The portion of the RNA-DNA heteroduplex is digested by the RNase H, resulting in a ssDNA product attached to the tRNA primer. This ssDNA/tRNA hybridizes with the identical R region situated at the 3' end of viral RNA. This template exchange, known as minus-strand DNA strong stop transfer, can be either intra- or intermolecular. RT uses the 3' end of this newly synthesized short ssDNA to perform the RNA-dependent minus-strand DNA synthesis of the whole template. RNase H digests the RNA template except for a polypurine tract (PPT) situated at the 5' end of the genome. It is not clear if both polymerase and RNase H activities are simultaneous. RNase H probably can proceed both in a polymerase-dependent (RNA cut into small fragments by the same RT performing DNA synthesis) and a polymerase-independent mode (cleavage of remaining RNA fragments by free RTs). Secondly, RT performs DNA-directed plus-strand DNA synthesis using the PPT that has not been removed by RNase H as primers. PPT and tRNA primers are then removed by RNase H. The 3' and 5' ssDNA PBS regions hybridize to form a circular dsDNA intermediate. Strand displacement synthesis by RT to the PBS and PPT ends produces a blunt ended, linear dsDNA copy of the viral genome that includes long terminal repeats (LTRs) at both ends. In terms of biological role, catalyzes viral DNA integration into the host chromosome, by performing a series of DNA cutting and joining reactions. This enzyme activity takes place after virion entry into a cell and reverse transcription of the RNA genome in dsDNA. The first step in the integration process is 3' processing. This step requires a complex comprising the viral genome, matrix protein and integrase. This complex is called the pre-integration complex (PIC). The integrase protein removes 2 nucleotides from each 3' end of the viral DNA, leaving recessed CA OH's at the 3' ends. In the second step that requires cell division, the PIC enters cell nucleus. In the third step, termed strand transfer, the integrase protein joins the previously processed 3' ends to the 5' ends of strands of target cellular DNA at the site of integration. The last step is viral DNA integration into host chromosome. The chain is Gag-Pol polyprotein (gag-pol) from Homo sapiens (Human).